The sequence spans 193 residues: Phosphatidylglycerophosphatase and protein-tyrosine phosphatase 1 (193 aa).

A mitochondrion-targeting transit peptide spans 1–31; that stretch reads MAASAWLEAGLARVLFYPTLLYTVFRGRVGG. Residues 37 to 188 form the Tyrosine-protein phosphatase domain; that stretch reads WYHRIDHTVL…LKEFHKEIAA (152 aa). Residue lysine 85 is modified to N6-succinyllysine. Catalysis depends on cysteine 132, which acts as the Phosphocysteine intermediate.

The protein belongs to the protein-tyrosine phosphatase family. Non-receptor class dual specificity subfamily. In terms of assembly, interacts with STYXL1; the interaction inhibits PTPMT1 catalytic activity. As to expression, expressed in liver and in pancreatic beta cells.

It localises to the mitochondrion inner membrane. The enzyme catalyses O-phospho-L-tyrosyl-[protein] + H2O = L-tyrosyl-[protein] + phosphate. It carries out the reaction O-phospho-L-seryl-[protein] + H2O = L-seryl-[protein] + phosphate. The catalysed reaction is O-phospho-L-threonyl-[protein] + H2O = L-threonyl-[protein] + phosphate. It catalyses the reaction a 1,2-diacyl-sn-glycero-3-phospho-(1'-sn-glycero-3'-phosphate) + H2O = a 1,2-diacyl-sn-glycero-3-phospho-(1'-sn-glycerol) + phosphate. The enzyme catalyses 1,2-di-(9Z-octadecenoyl)-sn-glycero-3-phospho-(1'-sn-glycerol-3'-phosphate) + H2O = 1,2-di-(9Z-octadecenoyl)-sn-glycero-3-phospho-(1'-sn-glycerol) + phosphate. It carries out the reaction 1,2-dioctanoyl-sn-glycero-3-phospho-(1D-myo-inositol-5-phosphate) + H2O = 1,2-dioctanoyl-sn-glycero-3-phospho-(1D-myo-inositol) + phosphate. The catalysed reaction is a 1-acyl-2-hexanoyl-sn-glycero-3-phospho-(1D-myo-inositol-5-phosphate) + H2O = a 1-acyl-2-hexanoyl-sn-glycero-3-phospho-(1D-myo-inositol) + phosphate. It catalyses the reaction 1,2-dibutyryl-sn-glycero-3-phospho-(1D-myo-inositol-5-phosphate) + H2O = 1,2-dibutyryl-sn-glycero-3-phospho-(1D-myo-inositol) + phosphate. It functions in the pathway phospholipid metabolism; phosphatidylglycerol biosynthesis; phosphatidylglycerol from CDP-diacylglycerol: step 2/2. Its function is as follows. Lipid phosphatase which dephosphorylates phosphatidylglycerophosphate (PGP) to phosphatidylglycerol (PG). PGP is an essential intermediate in the biosynthetic pathway of cardiolipin, a mitochondrial-specific phospholipid regulating the membrane integrity and activities of the organelle. Has also been shown to display phosphatase activity toward phosphoprotein substrates, specifically mediates dephosphorylation of mitochondrial proteins, thereby playing an essential role in ATP production. Has probably a preference for proteins phosphorylated on Ser and/or Thr residues compared to proteins phosphorylated on Tyr residues. Probably involved in regulation of insulin secretion in pancreatic beta cells. May prevent intrinsic apoptosis, probably by regulating mitochondrial membrane integrity. The sequence is that of Phosphatidylglycerophosphatase and protein-tyrosine phosphatase 1 from Rattus norvegicus (Rat).